The sequence spans 99 residues: UPF0235 protein Sbal_3028 (99 aa).

This sequence belongs to the UPF0235 family.

In Shewanella baltica (strain OS155 / ATCC BAA-1091), this protein is UPF0235 protein Sbal_3028.